We begin with the raw amino-acid sequence, 37 residues long: Large ribosomal subunit protein bL36c (37 aa).

It belongs to the bacterial ribosomal protein bL36 family.

It localises to the plastid. The protein localises to the chloroplast. The polypeptide is Large ribosomal subunit protein bL36c (Vitis vinifera (Grape)).